We begin with the raw amino-acid sequence, 238 residues long: Probable transcriptional regulatory protein VPA0011 (238 aa).

It belongs to the TACO1 family.

Its subcellular location is the cytoplasm. This chain is Probable transcriptional regulatory protein VPA0011, found in Vibrio parahaemolyticus serotype O3:K6 (strain RIMD 2210633).